The chain runs to 207 residues: Large ribosomal subunit protein uL4 (207 aa).

The disordered stretch occupies residues 48-89; it reads SHKVKNRSEVRGGGRKPWRQKGTGRARQGSIRSPQWRGGGVV. The span at 60–71 shows a compositional bias: basic residues; that stretch reads GGRKPWRQKGTG.

It belongs to the universal ribosomal protein uL4 family. In terms of assembly, part of the 50S ribosomal subunit.

Functionally, one of the primary rRNA binding proteins, this protein initially binds near the 5'-end of the 23S rRNA. It is important during the early stages of 50S assembly. It makes multiple contacts with different domains of the 23S rRNA in the assembled 50S subunit and ribosome. Forms part of the polypeptide exit tunnel. The sequence is that of Large ribosomal subunit protein uL4 from Bacillus velezensis (strain DSM 23117 / BGSC 10A6 / LMG 26770 / FZB42) (Bacillus amyloliquefaciens subsp. plantarum).